The sequence spans 471 residues: Ribulose bisphosphate carboxylase large chain (471 aa).

The propeptide occupies 1–2; sequence MS. An N-acetylproline modification is found at P3. K14 carries the post-translational modification N6,N6,N6-trimethyllysine. Positions 123 and 173 each coordinate substrate. K175 serves as the catalytic Proton acceptor. K177 contacts substrate. Mg(2+) is bound by residues K201, D203, and E204. N6-carboxylysine is present on K201. The active-site Proton acceptor is the H294. The substrate site is built by R295, H327, and S379.

This sequence belongs to the RuBisCO large chain family. Type I subfamily. As to quaternary structure, heterohexadecamer of 8 large chains and 8 small chains; disulfide-linked. The disulfide link is formed within the large subunit homodimers. The cofactor is Mg(2+). In terms of processing, the disulfide bond which can form in the large chain dimeric partners within the hexadecamer appears to be associated with oxidative stress and protein turnover.

The protein localises to the plastid. It localises to the chloroplast. The enzyme catalyses 2 (2R)-3-phosphoglycerate + 2 H(+) = D-ribulose 1,5-bisphosphate + CO2 + H2O. The catalysed reaction is D-ribulose 1,5-bisphosphate + O2 = 2-phosphoglycolate + (2R)-3-phosphoglycerate + 2 H(+). RuBisCO catalyzes two reactions: the carboxylation of D-ribulose 1,5-bisphosphate, the primary event in carbon dioxide fixation, as well as the oxidative fragmentation of the pentose substrate in the photorespiration process. Both reactions occur simultaneously and in competition at the same active site. This is Ribulose bisphosphate carboxylase large chain from Drymophloeus subdistichus (Palm tree).